The following is a 147-amino-acid chain: D-aminoacyl-tRNA deacylase (147 aa).

The Gly-cisPro motif, important for rejection of L-amino acids motif lies at 136 to 137; it reads GP.

Belongs to the DTD family. As to quaternary structure, homodimer.

The protein localises to the cytoplasm. The enzyme catalyses glycyl-tRNA(Ala) + H2O = tRNA(Ala) + glycine + H(+). It catalyses the reaction a D-aminoacyl-tRNA + H2O = a tRNA + a D-alpha-amino acid + H(+). In terms of biological role, an aminoacyl-tRNA editing enzyme that deacylates mischarged D-aminoacyl-tRNAs. Also deacylates mischarged glycyl-tRNA(Ala), protecting cells against glycine mischarging by AlaRS. Acts via tRNA-based rather than protein-based catalysis; rejects L-amino acids rather than detecting D-amino acids in the active site. By recycling D-aminoacyl-tRNA to D-amino acids and free tRNA molecules, this enzyme counteracts the toxicity associated with the formation of D-aminoacyl-tRNA entities in vivo and helps enforce protein L-homochirality. The chain is D-aminoacyl-tRNA deacylase from Streptococcus pyogenes serotype M1.